The following is a 322-amino-acid chain: Adenine deaminase (322 aa).

3 residues coordinate Zn(2+): H11, H13, and H189. E192 serves as the catalytic Proton donor. D270 is a Zn(2+) binding site. Position 271 (D271) interacts with substrate.

This sequence belongs to the metallo-dependent hydrolases superfamily. Adenosine and AMP deaminases family. Adenine deaminase type 2 subfamily. The cofactor is Zn(2+).

The enzyme catalyses adenine + H2O + H(+) = hypoxanthine + NH4(+). Catalyzes the hydrolytic deamination of adenine to hypoxanthine. Plays an important role in the purine salvage pathway and in nitrogen catabolism. The protein is Adenine deaminase of Rhizobium johnstonii (strain DSM 114642 / LMG 32736 / 3841) (Rhizobium leguminosarum bv. viciae).